A 365-amino-acid polypeptide reads, in one-letter code: NAD(P)H-quinone oxidoreductase subunit 1, chloroplastic (365 aa).

The next 8 membrane-spanning stretches (helical) occupy residues 27–47 (VWIF…VLVI), 98–118 (FSIG…VIPF), 129–149 (IGIF…LMSG), 165–185 (AAQS…ISLL), 203–223 (FWGW…ISSL), 253–273 (FGLF…FVTI), 302–322 (IFGT…FLFI), and 345–365 (FLLP…LFSL).

Belongs to the complex I subunit 1 family. As to quaternary structure, NDH is composed of at least 16 different subunits, 5 of which are encoded in the nucleus.

Its subcellular location is the plastid. It is found in the chloroplast thylakoid membrane. The enzyme catalyses a plastoquinone + NADH + (n+1) H(+)(in) = a plastoquinol + NAD(+) + n H(+)(out). It catalyses the reaction a plastoquinone + NADPH + (n+1) H(+)(in) = a plastoquinol + NADP(+) + n H(+)(out). NDH shuttles electrons from NAD(P)H:plastoquinone, via FMN and iron-sulfur (Fe-S) centers, to quinones in the photosynthetic chain and possibly in a chloroplast respiratory chain. The immediate electron acceptor for the enzyme in this species is believed to be plastoquinone. Couples the redox reaction to proton translocation, and thus conserves the redox energy in a proton gradient. This is NAD(P)H-quinone oxidoreductase subunit 1, chloroplastic from Arabis hirsuta (Hairy rock-cress).